Reading from the N-terminus, the 296-residue chain is GTPase Era (296 aa).

The region spanning 2-171 is the Era-type G domain; that stretch reads KAGFIAVVGR…LEALDPYLED (170 aa). Positions 10–17 are G1; sequence GRPNVGKS. 10 to 17 serves as a coordination point for GTP; that stretch reads GRPNVGKS. The G2 stretch occupies residues 36–40; it reads GTTRD. Residues 57 to 60 form a G3 region; it reads DTPG. GTP is bound by residues 57 to 61 and 120 to 123; these read DTPGI and NKVD. A G4 region spans residues 120-123; sequence NKVD. The interval 150-152 is G5; it reads ASG. The 78-residue stretch at 202–279 folds into the KH type-2 domain; sequence TRDEIPHSVA…YLGLWVKVKD (78 aa).

This sequence belongs to the TRAFAC class TrmE-Era-EngA-EngB-Septin-like GTPase superfamily. Era GTPase family. As to quaternary structure, monomer.

It is found in the cytoplasm. It localises to the cell inner membrane. In terms of biological role, an essential GTPase that binds both GDP and GTP, with rapid nucleotide exchange. Plays a role in 16S rRNA processing and 30S ribosomal subunit biogenesis and possibly also in cell cycle regulation and energy metabolism. In Fusobacterium nucleatum subsp. nucleatum (strain ATCC 25586 / DSM 15643 / BCRC 10681 / CIP 101130 / JCM 8532 / KCTC 2640 / LMG 13131 / VPI 4355), this protein is GTPase Era.